A 133-amino-acid polypeptide reads, in one-letter code: Small ribosomal subunit protein eS8 (133 aa).

The interval 1 to 31 is disordered; the sequence is MGFYQGPDNRKITGGLKGKHRDKRKYEIGNP.

Belongs to the eukaryotic ribosomal protein eS8 family. Part of the 30S ribosomal subunit.

The protein is Small ribosomal subunit protein eS8 of Saccharolobus solfataricus (strain ATCC 35092 / DSM 1617 / JCM 11322 / P2) (Sulfolobus solfataricus).